An 812-amino-acid chain; its full sequence is Leucine--tRNA ligase (812 aa).

A 'HIGH' region motif is present at residues 40–51 (SYPSGSNLHAGH). The 'KMSKS' region motif lies at 572–576 (KMSKS). Lysine 575 lines the ATP pocket.

This sequence belongs to the class-I aminoacyl-tRNA synthetase family.

The protein localises to the cytoplasm. It carries out the reaction tRNA(Leu) + L-leucine + ATP = L-leucyl-tRNA(Leu) + AMP + diphosphate. The protein is Leucine--tRNA ligase of Clostridium tetani (strain Massachusetts / E88).